The following is a 261-amino-acid chain: uncharacterized protein (261 aa).

Glutamate 46 is an active-site residue.

This sequence belongs to the PhzF family.

This is an uncharacterized protein from Pseudomonas aeruginosa (strain ATCC 15692 / DSM 22644 / CIP 104116 / JCM 14847 / LMG 12228 / 1C / PRS 101 / PAO1).